A 159-amino-acid chain; its full sequence is 2-C-methyl-D-erythritol 2,4-cyclodiphosphate synthase (159 aa).

A divalent metal cation is bound by residues Asp8 and His10. 4-CDP-2-C-methyl-D-erythritol 2-phosphate contacts are provided by residues 8–10 (DVH) and 34–35 (HS). Residue His42 participates in a divalent metal cation binding. 4-CDP-2-C-methyl-D-erythritol 2-phosphate-binding positions include 56-58 (DIG), 61-65 (FPDTD), 100-106 (AQAPRML), 132-135 (TTTE), Phe139, and Arg142.

It belongs to the IspF family. Homotrimer. A divalent metal cation serves as cofactor.

It carries out the reaction 4-CDP-2-C-methyl-D-erythritol 2-phosphate = 2-C-methyl-D-erythritol 2,4-cyclic diphosphate + CMP. Its pathway is isoprenoid biosynthesis; isopentenyl diphosphate biosynthesis via DXP pathway; isopentenyl diphosphate from 1-deoxy-D-xylulose 5-phosphate: step 4/6. Its function is as follows. Involved in the biosynthesis of isopentenyl diphosphate (IPP) and dimethylallyl diphosphate (DMAPP), two major building blocks of isoprenoid compounds. Catalyzes the conversion of 4-diphosphocytidyl-2-C-methyl-D-erythritol 2-phosphate (CDP-ME2P) to 2-C-methyl-D-erythritol 2,4-cyclodiphosphate (ME-CPP) with a corresponding release of cytidine 5-monophosphate (CMP). The protein is 2-C-methyl-D-erythritol 2,4-cyclodiphosphate synthase of Escherichia coli O45:K1 (strain S88 / ExPEC).